Consider the following 172-residue polypeptide: Nicotinamide-nucleotide adenylyltransferase (172 aa).

The protein belongs to the archaeal NMN adenylyltransferase family.

The protein resides in the cytoplasm. It catalyses the reaction beta-nicotinamide D-ribonucleotide + ATP + H(+) = diphosphate + NAD(+). It functions in the pathway cofactor biosynthesis; NAD(+) biosynthesis; NAD(+) from nicotinamide D-ribonucleotide: step 1/1. The protein is Nicotinamide-nucleotide adenylyltransferase of Methanococcus vannielii (strain ATCC 35089 / DSM 1224 / JCM 13029 / OCM 148 / SB).